The chain runs to 174 residues: Adenylate kinase (174 aa).

Residues 12–41 form an NMP region; the sequence is STGDMLRAAIKAGTPLGLEAKKIIDEGGLV. AMP is bound by residues threonine 13, arginine 18, 39–41, 67–70, and glutamine 74; these read GLV and GFPR. The segment at 104 to 141 is LID; sequence GRRVHLASGRTYHVTYNPPKVEGKDDVTGEDLIQRDDD. ATP is bound by residues arginine 105 and 114–115; that span reads TY. AMP contacts are provided by arginine 138 and arginine 149.

The protein belongs to the adenylate kinase family. As to quaternary structure, monomer.

The protein localises to the cytoplasm. It catalyses the reaction AMP + ATP = 2 ADP. It functions in the pathway purine metabolism; AMP biosynthesis via salvage pathway; AMP from ADP: step 1/1. Its function is as follows. Catalyzes the reversible transfer of the terminal phosphate group between ATP and AMP. Plays an important role in cellular energy homeostasis and in adenine nucleotide metabolism. This chain is Adenylate kinase, found in Neisseria cinerea.